The primary structure comprises 277 residues: Small ribosomal subunit protein uS3 (277 aa).

Residues 43 to 111 (IRKVMNKDLE…QVQLNIFEVK (69 aa)) enclose the KH type-2 domain. The interval 216–277 (FEEQQAQQGN…EAAVEPETKE (62 aa)) is disordered. The span at 264–277 (EVSKEAAVEPETKE) shows a compositional bias: basic and acidic residues.

This sequence belongs to the universal ribosomal protein uS3 family. In terms of assembly, part of the 30S ribosomal subunit. Forms a tight complex with proteins S10 and S14.

Its function is as follows. Binds the lower part of the 30S subunit head. Binds mRNA in the 70S ribosome, positioning it for translation. The sequence is that of Small ribosomal subunit protein uS3 from Bifidobacterium animalis subsp. lactis (strain AD011).